The following is a 302-amino-acid chain: Protein transport protein SEC13 homolog B (302 aa).

WD repeat units follow at residues 9 to 48 (GHEDIVHDVQMDYYGKRIATASSDCTIKITGVSNNGGSQQ), 54 to 95 (GHRG…QWTQ), 101 to 142 (DHKS…GWDT), 148 to 201 (AHPV…WKMD), 208 to 251 (KHTD…EQWE), and 257 to 296 (DFMTPVWRVSWSLTGNLLAVSDGNNNVTVWKEAVDGEWEQ).

It belongs to the WD repeat SEC13 family. In terms of assembly, part of the nuclear pore complex (NPC). The NPC has an eight-fold symmetrical structure comprising a central transport channel and two rings, the cytoplasmic and nuclear rings, to which eight filaments are attached. The cytoplasmic filaments have loose ends, while the nuclear filaments are joined in a distal ring, forming a nuclear basket. NPCs are highly dynamic in configuration and composition, and can be devided in 3 subcomplexes, the NUP62 subcomplex, the NUP107-160 subcomplex and the NUP93 subcomplex, containing approximately 30 different nucleoporin proteins. Interacts with MAG5, SEC31A and SEC31B.

The protein resides in the golgi apparatus. Its subcellular location is the endoplasmic reticulum. It is found in the nucleus envelope. It localises to the nucleus. The protein localises to the nuclear pore complex. In terms of biological role, required for protein transport from the endoplasmic reticulum to the Golgi apparatus. The polypeptide is Protein transport protein SEC13 homolog B (Arabidopsis thaliana (Mouse-ear cress)).